The sequence spans 743 residues: MMTQANAYFYDGADVALLNGQYTDVFSLLGMHSANEGKALIVRCFLRNALSVDVISIKDGRKVASLDKVNEQGLFAGTLGRRVKPFLYLLRVEYPQCQLDIVDPYQFDSLLNSDDIYLFGEGSAERAYEFLGANWRQTQGVEGVHFCVWAPNAKRVSVVGDFNHWDDTRHVMRQHLANGLWELFLPNVVEGAHYKFDLVYQNGERHAKSDPMATQMECAPHNASIVPPKAHHSWNDTAWMSKRAATAWHKAPMSAYEVHLGSWRRKGEQGEQYLDYQDLIEQLIPYVKEQGFTHIELMPISEFPFDGSWGYQPVGLYAPTHRFGDANGLKAFVDACHQAGIGIILDWVSAHFPKDPHGLVRFDGTCLYEHEDPRKGTHPDWDTLIYNYDRGEVRSFLLSNACYWLREFHFDGLRLDAVSSMLYLDYSREPGQWLPNTYGGRENLEAINFLQILNQRLYQAFPGICMIAEESTAFAGVTKPTDQQGLGFGFKWNMGWMNDSLSYLGRDPLYRQFHHHQLTFSLMYAYTEQFMLSVSHDEVVHGKGSLLHKIPGDDWQKFATLRAYYGFMWGHPGKKLLFMGCEFGQRNEWNHNQSLDWHLLAYEPHQGVQRWLKDLNHLYQAMPALSVQDYEGAGFSWLDCENSRDSIFTFVRYGLAGDAPLVFVINMTPQLHTGFRIGLPLAGDYREYLNSDSQIYGGSNQGNAGTVVAESLPWQGMAQSALITVPPLGCLVIGPATGLAEAN.

The active-site Nucleophile is the D416. E469 serves as the catalytic Proton donor.

This sequence belongs to the glycosyl hydrolase 13 family. GlgB subfamily. As to quaternary structure, monomer.

It catalyses the reaction Transfers a segment of a (1-&gt;4)-alpha-D-glucan chain to a primary hydroxy group in a similar glucan chain.. The protein operates within glycan biosynthesis; glycogen biosynthesis. Functionally, catalyzes the formation of the alpha-1,6-glucosidic linkages in glycogen by scission of a 1,4-alpha-linked oligosaccharide from growing alpha-1,4-glucan chains and the subsequent attachment of the oligosaccharide to the alpha-1,6 position. This is 1,4-alpha-glucan branching enzyme GlgB from Shewanella baltica (strain OS223).